We begin with the raw amino-acid sequence, 262 residues long: Hydroxyethylthiazole kinase (262 aa).

A substrate-binding site is contributed by M41. 2 residues coordinate ATP: R117 and S163. G190 serves as a coordination point for substrate.

This sequence belongs to the Thz kinase family. It depends on Mg(2+) as a cofactor.

It catalyses the reaction 5-(2-hydroxyethyl)-4-methylthiazole + ATP = 4-methyl-5-(2-phosphooxyethyl)-thiazole + ADP + H(+). Its pathway is cofactor biosynthesis; thiamine diphosphate biosynthesis; 4-methyl-5-(2-phosphoethyl)-thiazole from 5-(2-hydroxyethyl)-4-methylthiazole: step 1/1. In terms of biological role, catalyzes the phosphorylation of the hydroxyl group of 4-methyl-5-beta-hydroxyethylthiazole (THZ). This is Hydroxyethylthiazole kinase from Levilactobacillus brevis (strain ATCC 367 / BCRC 12310 / CIP 105137 / JCM 1170 / LMG 11437 / NCIMB 947 / NCTC 947) (Lactobacillus brevis).